The primary structure comprises 153 residues: Riboflavin synthase (153 aa).

It belongs to the DMRL synthase family. Homooligomer. Mg(2+) serves as cofactor.

The catalysed reaction is 2 6,7-dimethyl-8-(1-D-ribityl)lumazine + H(+) = 5-amino-6-(D-ribitylamino)uracil + riboflavin. Its pathway is cofactor biosynthesis; riboflavin biosynthesis; riboflavin from 2-hydroxy-3-oxobutyl phosphate and 5-amino-6-(D-ribitylamino)uracil: step 2/2. Inhibited by EDTA. The polypeptide is Riboflavin synthase (ribC) (Methanothermobacter thermautotrophicus (strain ATCC 29096 / DSM 1053 / JCM 10044 / NBRC 100330 / Delta H) (Methanobacterium thermoautotrophicum)).